Here is a 222-residue protein sequence, read N- to C-terminus: Kinetochore protein Spc25 (222 aa).

A coiled-coil region spans residues 51–86 (RHQRKVGKLQKVLMERREELDKRVSFIEELDRELEA).

It belongs to the SPC25 family. As to quaternary structure, component of the Ndc80 complex, which is composed of Ndc80, Nuf2 and Spc25.

The protein resides in the nucleus. The protein localises to the chromosome. It localises to the centromere. Its subcellular location is the kinetochore. Its function is as follows. Acts as a component of the essential kinetochore-associated Ndc80 complex, which is required for chromosome segregation and spindle checkpoint activity during meiosis and mitosis. Required for kinetochore integrity and the organization of stable microtubule binding sites in the outer plate of the kinetochore. Participates in SAC signaling that responds specifically to disruptions in spindle microtubule dynamics. The NDC80 complex synergistically enhances the affinity of the SKA1 complex for microtubules and may allow the NDC80 complex to track depolymerizing microtubules. The polypeptide is Kinetochore protein Spc25 (Drosophila mauritiana (Fruit fly)).